The chain runs to 331 residues: Aflatoxin B1 aldehyde reductase member 4 (331 aa).

Position 44 (Asp-44) interacts with NADP(+). The active-site Proton donor is the Tyr-49. A Phosphoserine modification is found at Ser-85. His-113 lines the substrate pocket. Residues Ser-143–Asn-144, Gln-169, Asn-198–Lys-208, and Arg-222 contribute to the NADP(+) site. Tyr-232 contacts substrate. Ser-290–Asn-298 provides a ligand contact to NADP(+).

The protein belongs to the aldo/keto reductase family. Aldo/keto reductase 2 subfamily. In terms of tissue distribution, mainly expressed in uterus.

Its function is as follows. Can reduce the dialdehyde protein-binding form of aflatoxin B1 (AFB1) to the non-binding AFB1 dialcohol. May be involved in protection of liver against the toxic and carcinogenic effects of AFB1, a potent hepatocarcinogen. This chain is Aflatoxin B1 aldehyde reductase member 4 (AKR7L), found in Homo sapiens (Human).